Reading from the N-terminus, the 213-residue chain is Small ribosomal subunit protein uS5 (213 aa).

Residues L54–V117 form the S5 DRBM domain.

It belongs to the universal ribosomal protein uS5 family. Part of the 30S ribosomal subunit. Contacts protein S4.

Functionally, with S4 and S12 plays an important role in translational accuracy. The chain is Small ribosomal subunit protein uS5 from Hyperthermus butylicus (strain DSM 5456 / JCM 9403 / PLM1-5).